The chain runs to 688 residues: Glycine--tRNA ligase beta subunit (688 aa).

Belongs to the class-II aminoacyl-tRNA synthetase family. In terms of assembly, tetramer of two alpha and two beta subunits.

Its subcellular location is the cytoplasm. It carries out the reaction tRNA(Gly) + glycine + ATP = glycyl-tRNA(Gly) + AMP + diphosphate. The protein is Glycine--tRNA ligase beta subunit of Listeria welshimeri serovar 6b (strain ATCC 35897 / DSM 20650 / CCUG 15529 / CIP 8149 / NCTC 11857 / SLCC 5334 / V8).